Here is a 379-residue protein sequence, read N- to C-terminus: Succinyl-diaminopimelate desuccinylase (379 aa).

Residue His70 participates in Zn(2+) binding. Asp72 is an active-site residue. Asp103 contacts Zn(2+). Residue Glu137 is the Proton acceptor of the active site. Zn(2+) contacts are provided by Glu138, Glu166, and His352.

Belongs to the peptidase M20A family. DapE subfamily. Homodimer. The cofactor is Zn(2+). It depends on Co(2+) as a cofactor.

It catalyses the reaction N-succinyl-(2S,6S)-2,6-diaminopimelate + H2O = (2S,6S)-2,6-diaminopimelate + succinate. It participates in amino-acid biosynthesis; L-lysine biosynthesis via DAP pathway; LL-2,6-diaminopimelate from (S)-tetrahydrodipicolinate (succinylase route): step 3/3. Its function is as follows. Catalyzes the hydrolysis of N-succinyl-L,L-diaminopimelic acid (SDAP), forming succinate and LL-2,6-diaminopimelate (DAP), an intermediate involved in the bacterial biosynthesis of lysine and meso-diaminopimelic acid, an essential component of bacterial cell walls. The protein is Succinyl-diaminopimelate desuccinylase of Shewanella sp. (strain W3-18-1).